A 483-amino-acid polypeptide reads, in one-letter code: Lipoamide acyltransferase component of branched-chain alpha-keto acid dehydrogenase complex, mitochondrial (483 aa).

The transit peptide at 1-75 directs the protein to the mitochondrion; it reads MIARRIWRSH…AMATDSNSGL (75 aa). Positions 76–150 constitute a Lipoyl-binding domain; it reads IDVPLAQTGE…KVGETLVRLA (75 aa). At Lys116 the chain carries N6-lipoyllysine. Positions 183-220 constitute a Peripheral subunit-binding (PSBD) domain; sequence LSTPAVRNLAKDLGIDINVITGTGKDGRVLKEDVLRFS. Residues His453 and Asp457 contribute to the active site.

Belongs to the 2-oxoacid dehydrogenase family. In terms of assembly, forms a 24-polypeptide structural core with octahedral symmetry. (R)-lipoate serves as cofactor. Expressed in the non-photosynthetic organs such as siliques, flowers and roots.

Its subcellular location is the mitochondrion matrix. The catalysed reaction is N(6)-[(R)-dihydrolipoyl]-L-lysyl-[protein] + 2-methylpropanoyl-CoA = N(6)-[(R)-S(8)-2-methylpropanoyldihydrolipoyl]-L-lysyl-[protein] + CoA. Its function is as follows. The branched-chain alpha-keto dehydrogenase complex catalyzes the overall conversion of alpha-keto acids to acyl-CoA and CO(2). It contains multiple copies of three enzymatic components: branched-chain alpha-keto acid decarboxylase (E1), lipoamide acyltransferase (E2) and lipoamide dehydrogenase (E3). Within this complex, the catalytic function of this enzyme is to accept, and to transfer to coenzyme A, acyl groups that are generated by the branched-chain alpha-keto acid decarboxylase component. Required during sugar starvation and acts under the control of a sugar-sensing mechanism involving Ser/Thr kinases and phosphatases. The sequence is that of Lipoamide acyltransferase component of branched-chain alpha-keto acid dehydrogenase complex, mitochondrial (BCE2) from Arabidopsis thaliana (Mouse-ear cress).